The primary structure comprises 1080 residues: Carbamoyl phosphate synthase large chain (1080 aa).

The tract at residues 1-403 is carboxyphosphate synthetic domain; it reads MPKRTDLRTI…SLQKAVRGLE (403 aa). ATP is bound by residues Arg-129, Arg-169, Gly-175, Gly-176, Glu-208, Val-210, Glu-215, Gly-241, Val-242, His-243, Gln-285, and Glu-299. Residues 133-328 form the ATP-grasp 1 domain; the sequence is RVAMQEIGLE…IAKIAAKLAV (196 aa). Mg(2+)-binding residues include Gln-285, Glu-299, and Asn-301. Mn(2+)-binding residues include Gln-285, Glu-299, and Asn-301. The interval 404–554 is oligomerization domain; sequence TGKVGLEPTG…YSTYEEECEA (151 aa). Residues 555-942 form a carbamoyl phosphate synthetic domain region; that stretch reads APSDRRKIMI…AFARAQEAGD (388 aa). The ATP-grasp 2 domain occupies 679–876; it reads QRLVQQLGLR…LAKIAARCMT (198 aa). Residues Arg-715, Arg-754, Leu-756, Glu-761, Gly-787, Val-788, His-789, Ser-790, Gln-830, and Glu-847 each contribute to the ATP site. Positions 830, 847, and 849 each coordinate Mg(2+). Residues Gln-830, Glu-847, and Asn-849 each coordinate Mn(2+). Residues 943–1080 enclose the MGS-like domain; that stretch reads IRAPQPGRAF…LQELHKELQV (138 aa). An allosteric domain region spans residues 943–1080; it reads IRAPQPGRAF…LQELHKELQV (138 aa).

This sequence belongs to the CarB family. Composed of two chains; the small (or glutamine) chain promotes the hydrolysis of glutamine to ammonia, which is used by the large (or ammonia) chain to synthesize carbamoyl phosphate. Tetramer of heterodimers (alpha,beta)4. It depends on Mg(2+) as a cofactor. Mn(2+) serves as cofactor.

It carries out the reaction hydrogencarbonate + L-glutamine + 2 ATP + H2O = carbamoyl phosphate + L-glutamate + 2 ADP + phosphate + 2 H(+). The catalysed reaction is hydrogencarbonate + NH4(+) + 2 ATP = carbamoyl phosphate + 2 ADP + phosphate + 2 H(+). It functions in the pathway amino-acid biosynthesis; L-arginine biosynthesis; carbamoyl phosphate from bicarbonate: step 1/1. Its pathway is pyrimidine metabolism; UMP biosynthesis via de novo pathway; (S)-dihydroorotate from bicarbonate: step 1/3. Large subunit of the glutamine-dependent carbamoyl phosphate synthetase (CPSase). CPSase catalyzes the formation of carbamoyl phosphate from the ammonia moiety of glutamine, carbonate, and phosphate donated by ATP, constituting the first step of 2 biosynthetic pathways, one leading to arginine and/or urea and the other to pyrimidine nucleotides. The large subunit (synthetase) binds the substrates ammonia (free or transferred from glutamine from the small subunit), hydrogencarbonate and ATP and carries out an ATP-coupled ligase reaction, activating hydrogencarbonate by forming carboxy phosphate which reacts with ammonia to form carbamoyl phosphate. The sequence is that of Carbamoyl phosphate synthase large chain from Xylella fastidiosa (strain Temecula1 / ATCC 700964).